Here is a 215-residue protein sequence, read N- to C-terminus: Adenylate kinase (215 aa).

Residue 10–15 (GAGKGT) coordinates ATP. Positions 30–59 (STGDMFRAAIKDQTPLGQEAKSYMDKGELV) are NMP. AMP contacts are provided by residues Thr-31, Arg-36, 57–59 (ELV), 85–88 (GFPR), and Gln-92. An LID region spans residues 126–163 (GRRICPTCGATYHVIYNPPKVEGVCDIDGSALVQREDD). Position 127 (Arg-127) interacts with ATP. The Zn(2+) site is built by Cys-130 and Cys-133. 136–137 (TY) contributes to the ATP binding site. Positions 150 and 153 each coordinate Zn(2+). Residues Arg-160 and Arg-171 each coordinate AMP. Arg-199 is a binding site for ATP.

The protein belongs to the adenylate kinase family. Monomer.

The protein localises to the cytoplasm. It catalyses the reaction AMP + ATP = 2 ADP. Its pathway is purine metabolism; AMP biosynthesis via salvage pathway; AMP from ADP: step 1/1. Catalyzes the reversible transfer of the terminal phosphate group between ATP and AMP. Plays an important role in cellular energy homeostasis and in adenine nucleotide metabolism. The polypeptide is Adenylate kinase (Exiguobacterium sibiricum (strain DSM 17290 / CCUG 55495 / CIP 109462 / JCM 13490 / 255-15)).